The primary structure comprises 485 residues: MTWLNKQVQKRPDHPAFYFQDESWTFLEVQQEVSHWVATYQQVLAPEEKRVALFSKNSKELYFSILALWELGKELLFLNTHLTLAELTFQLKDAQVKTIIGAPETQALLEEISFVDVQPMIKKQHSLSHQEFQQPSDLESVASIMYTSGTTGQPKGVLQRFKNHLASARGTQENMGITAEDCWLCAVPLFHISGLSIVVRQLVLGCSIRLYDKFDEQQVTQDLQEGRGTVISVVATMLQQLLSVYPEAGYSASFKGMLLGGGPIAPDKLAQCEEKGIPVIQSYGMTETCSQVVALKFEDAALKIGSAGQPLKDMQIKIVDELGQEQPEKQVGEILLKGPNVVSGYLNQRQPEKWTADGWFKTGDMGYLDAQSYLYLVSRLSELIISGGENIYPTEVEQVLQAITGIKAAAVVGEPDAQWGAVPVAYVISDQEITLAQIQDQCSRKLAKYKRPKRIYFCHSFPQTASGKIAKHRFMTEEREAFLIR.

This sequence belongs to the ATP-dependent AMP-binding enzyme family. MenE subfamily.

It carries out the reaction 2-succinylbenzoate + ATP + CoA = 2-succinylbenzoyl-CoA + AMP + diphosphate. It participates in quinol/quinone metabolism; 1,4-dihydroxy-2-naphthoate biosynthesis; 1,4-dihydroxy-2-naphthoate from chorismate: step 5/7. It functions in the pathway quinol/quinone metabolism; menaquinone biosynthesis. Converts 2-succinylbenzoate (OSB) to 2-succinylbenzoyl-CoA (OSB-CoA). The sequence is that of 2-succinylbenzoate--CoA ligase from Enterococcus faecalis (strain ATCC 700802 / V583).